The chain runs to 347 residues: Merozoite surface protein 2 (347 aa).

The signal sequence occupies residues Met-1–Ile-20. 2 N-linked (GlcNAc...) asparagine glycosylation sites follow: Asn-22 and Asn-36. Positions Ala-44 to Ser-273 are polymorphic region. 22 tandem repeats follow at residues Gly-53 to Asn-60, Gly-61 to Asn-68, Gly-69 to Asn-76, Gly-77 to Asn-84, Gly-85 to Asn-88, Gly-89 to Asn-92, Gly-93 to Asn-96, Gly-97 to Asn-100, Gly-101 to Asn-104, Gly-105 to Asn-108, Gly-109 to Asn-112, Gly-113 to Asn-116, Gly-117 to Asn-120, Gly-121 to Asn-124, Gly-125 to Asn-128, Gly-129 to Asn-132, Gly-133 to Asn-136, Gly-137 to Asn-140, Gly-141 to Asn-144, Gly-145 to Asn-152, Gly-153 to Asn-156, and Gly-157 to Asn-164. The segment at Gly-53 to Asn-164 is 6 X 8 AA repeats of G-A-V-A-S-A-G-N. Positions Gly-85–Asn-156 are 16 X 4 AA repeats of G-A-G-N. Residues Gly-165–Asn-206 are compositionally biased toward low complexity. Residues Gly-165 to Asn-308 are disordered. Composition is skewed to polar residues over residues Val-213–Arg-240 and Lys-247–Pro-275. An N-linked (GlcNAc...) asparagine glycan is attached at Asn-224. Asn-296 carries an N-linked (GlcNAc...) asparagine glycan. A disulfide bridge connects residues Cys-304 and Cys-312. N-linked (GlcNAc...) asparagine glycosylation is found at Asn-320 and Asn-321. A lipid anchor (GPI-anchor amidated asparagine) is attached at Asn-321. Residues Ser-322–Ile-347 constitute a propeptide, removed in mature form.

It is found in the cell membrane. Its function is as follows. May play a role in the merozoite attachment to the erythrocyte. This is Merozoite surface protein 2 from Plasmodium falciparum (isolate Nig32 / Nigeria).